A 274-amino-acid polypeptide reads, in one-letter code: NH(3)-dependent NAD(+) synthetase (274 aa).

46–53 contacts ATP; sequence GISGGQDS. D52 is a Mg(2+) binding site. R140 is a deamido-NAD(+) binding site. ATP is bound at residue T160. Residue E165 coordinates Mg(2+). Deamido-NAD(+) is bound by residues K173 and D180. Residues K189 and T211 each coordinate ATP. 260 to 261 provides a ligand contact to deamido-NAD(+); it reads HK.

This sequence belongs to the NAD synthetase family. Homodimer.

The catalysed reaction is deamido-NAD(+) + NH4(+) + ATP = AMP + diphosphate + NAD(+) + H(+). It participates in cofactor biosynthesis; NAD(+) biosynthesis; NAD(+) from deamido-NAD(+) (ammonia route): step 1/1. In terms of biological role, catalyzes the ATP-dependent amidation of deamido-NAD to form NAD. Uses ammonia as a nitrogen source. This is NH(3)-dependent NAD(+) synthetase from Streptococcus pyogenes serotype M6 (strain ATCC BAA-946 / MGAS10394).